Reading from the N-terminus, the 292-residue chain is Glyoxylase B2 (292 aa).

Residues His-72, His-74, Asp-76, His-77, His-148, and Asp-166 each contribute to the Zn(2+) site. Residues 175-181 (TARCDFP), 208-210 (HDY), and 284-287 (KIPL) contribute to the substrate site. His-208 serves as a coordination point for Zn(2+).

Belongs to the metallo-beta-lactamase superfamily. Glyoxalase II family. The cofactor is Zn(2+).

In Dictyostelium discoideum (Social amoeba), this protein is Glyoxylase B2 (gloB2).